Here is a 234-residue protein sequence, read N- to C-terminus: Small ribosomal subunit protein uS3 (234 aa).

One can recognise a KH type-2 domain in the interval 39–107; that stretch reads IRKYVKKELY…EIAVNIKEER (69 aa). Residues 213–222 show a composition bias toward basic and acidic residues; the sequence is PTEKAEETTS. Residues 213-234 form a disordered region; the sequence is PTEKAEETTSKPKRRPAKKRGK. Residues 223–234 show a composition bias toward basic residues; that stretch reads KPKRRPAKKRGK.

The protein belongs to the universal ribosomal protein uS3 family. In terms of assembly, part of the 30S ribosomal subunit. Forms a tight complex with proteins S10 and S14.

In terms of biological role, binds the lower part of the 30S subunit head. Binds mRNA in the 70S ribosome, positioning it for translation. In Aliarcobacter butzleri (strain RM4018) (Arcobacter butzleri), this protein is Small ribosomal subunit protein uS3.